A 580-amino-acid chain; its full sequence is DNA mismatch repair protein MutL (580 aa).

It belongs to the DNA mismatch repair MutL/HexB family.

This protein is involved in the repair of mismatches in DNA. It is required for dam-dependent methyl-directed DNA mismatch repair. May act as a 'molecular matchmaker', a protein that promotes the formation of a stable complex between two or more DNA-binding proteins in an ATP-dependent manner without itself being part of a final effector complex. The polypeptide is DNA mismatch repair protein MutL (Chlamydia felis (strain Fe/C-56) (Chlamydophila felis)).